The following is an 855-amino-acid chain: E3 ubiquitin-protein ligase TRIM71 (855 aa).

A2 is subject to N-acetylalanine. An RING-type zinc finger spans residues 12–94 (CLLCKEMCGS…ALKLRCPVCD (83 aa)). The segment covering 26-42 (SSSSSASSSSSQTSTSS) has biased composition (low complexity). Disordered stretches follow at residues 26–48 (SSSS…GGGP) and 126–177 (ADEP…SPGS). Residues 135–145 (RAGGGPGGAGG) show a composition bias toward gly residues. A compositionally biased stretch (basic residues) spans 147-157 (SNHRHHAHHPA). A B box-type 1; atypical zinc finger spans residues 181–228 (RRPHGCSSCDEGNAASSRCLDCQEHLCDNCVRAHQRVRLTKDHYIERG). Residues 260-301 (ERLGFCQHHDDEVLHLYCDTCSVPICRECTLGRHGGHSFAYL) form a B box-type 2 zinc finger. Zn(2+) is bound by residues C265, H268, C288, and H293. The stretch at 378-414 (QVKAKSLYLQVEKLRQNLNKLESTISAVQQVLEEGRA) forms a coiled coil. A Filamin repeat occupies 466–567 (SSGAFAPLTK…IENSPFKVVV (102 aa)). 6 NHL repeats span residues 580-623 (VLSF…FKPC), 627-670 (HHKF…FTFE), 674-717 (LLKF…FGPD), 721-764 (LNKY…IHPD), 768-811 (ARFL…FEAN), and 815-855 (LCKF…ILIF).

Belongs to the TRIM/RBCC family. In terms of assembly, interacts (via NHL repeats) with AGO2; the interaction increases in presence of RNA. Interacts with HSP90AA1. Interacts (via NHL repeats) with MOV10, PABPC1, PUM1, PUM2, STAU2, XRN1 and XRN2 in an RNA-dependent manner. Interacts with SHCBP1; leading to enhance its stability. Autoubiquitinated.

It is found in the cytoplasm. It localises to the P-body. It carries out the reaction S-ubiquitinyl-[E2 ubiquitin-conjugating enzyme]-L-cysteine + [acceptor protein]-L-lysine = [E2 ubiquitin-conjugating enzyme]-L-cysteine + N(6)-ubiquitinyl-[acceptor protein]-L-lysine.. Its pathway is protein modification; protein ubiquitination. Its function is as follows. E3 ubiquitin-protein ligase that cooperates with the microRNAs (miRNAs) machinery and promotes embryonic stem cells proliferation and maintenance. Binds to miRNAs and associates with AGO2, participating in post-transcriptional repression of transcripts such as CDKN1A. In addition, participates in post-transcriptional mRNA repression in a miRNA independent mechanism. Facilitates the G1-S transition to promote rapid embryonic stem cell self-renewal by repressing CDKN1A expression. Required to maintain proliferation and prevent premature differentiation of neural progenitor cells during early neural development: positively regulates FGF signaling by controlling the stability of SHCBP1. Specific regulator of miRNA biogenesis. Binds to miRNA MIR29A hairpin and postranscriptionally modulates MIR29A levels, which indirectly regulates TET proteins expression. The sequence is that of E3 ubiquitin-protein ligase TRIM71 (Trim71) from Rattus norvegicus (Rat).